The primary structure comprises 687 residues: Mediator of RNA polymerase II transcription subunit 17 (687 aa).

Residues 30–43 (LSSNPNSSLHSPTS) show a composition bias toward low complexity. 2 disordered regions span residues 30–70 (LSSN…NKTK) and 130–189 (QLGS…ETDD). Basic and acidic residues-rich tracts occupy residues 56-70 (TSIRLEGDELENKTK), 136-147 (SDGHNSEKKDTD), and 167-183 (KDNPVDSRNETDHKTNE).

Belongs to the Mediator complex subunit 17 family. In terms of assembly, component of the Mediator complex, which is composed of at least 21 subunits that form three structurally distinct submodules. The Mediator head module contains MED6, MED8, MED11, SRB4/MED17, SRB5/MED18, ROX3/MED19, SRB2/MED20 and SRB6/MED22, the middle module contains MED1, MED4, NUT1/MED5, MED7, CSE2/MED9, NUT2/MED10, SRB7/MED21 and SOH1/MED31, and the tail module contains MED2, PGD1/MED3, RGR1/MED14, GAL11/MED15 and SIN4/MED16. The head and the middle modules interact directly with RNA polymerase II, whereas the elongated tail module interacts with gene-specific regulatory proteins. The head module may also interact with the TFIIF complex. SRB4/MED17 interacts directly with MED6, MED11, ROX3/MED19, SRB2/MED20 and SRB6/MED22. Interacts directly with the activator GAL4.

It localises to the nucleus. Functionally, component of the Mediator complex, a coactivator involved in the regulated transcription of nearly all RNA polymerase II-dependent genes. Mediator functions as a bridge to convey information from gene-specific regulatory proteins to the basal RNA polymerase II transcription machinery. The Mediator complex, having a compact conformation in its free form, is recruited to promoters by direct interactions with regulatory proteins and serves for the assembly of a functional preinitiation complex with RNA polymerase II and the general transcription factors. The Mediator complex unfolds to an extended conformation and partially surrounds RNA polymerase II, specifically interacting with the unphosphorylated form of the C-terminal domain (CTD) of RNA polymerase II. The Mediator complex dissociates from the RNA polymerase II holoenzyme and stays at the promoter when transcriptional elongation begins. This is Mediator of RNA polymerase II transcription subunit 17 (SRB4) from Saccharomyces cerevisiae (strain ATCC 204508 / S288c) (Baker's yeast).